We begin with the raw amino-acid sequence, 344 residues long: HTH-type transcriptional repressor MelR (344 aa).

Residues 2–58 (VRIKDIALKAKVSSATVSRILNEDESLSVAGETRQRVINIAEELGYQTVAKRRKSRG) form the HTH lacI-type domain. Positions 4–23 (IKDIALKAKVSSATVSRILN) form a DNA-binding region, H-T-H motif.

Its subcellular location is the cytoplasm. Its function is as follows. Represses the melibiose operon melREDCA in the absence of melibiose or raffinose. Binds to two binding sites at the promoter region of the operon. The chain is HTH-type transcriptional repressor MelR from Bacillus subtilis (strain 168).